The chain runs to 265 residues: RWD domain-containing protein 3 (265 aa).

The region spanning 7–114 (EEVAALSAIY…WTQQNLNNLI (108 aa)) is the RWD domain.

The protein localises to the nucleus. The protein resides in the cytoplasm. Enhancer of SUMO conjugation. Increases SUMO conjugation to proteins by promoting the: binding of E1 and E2 enzymes, thioester linkage between SUMO and ube2i/ubc9 and transfer of SUMO to specific target proteins which include hif1a, pias, nfkbia, nr3c1 and top1. Has no effect on ubiquitination. This Xenopus tropicalis (Western clawed frog) protein is RWD domain-containing protein 3 (rwdd3).